The following is a 341-amino-acid chain: Glycerol-3-phosphate dehydrogenase [NAD(P)+] (341 aa).

NADPH-binding residues include serine 14, phenylalanine 15, arginine 35, and lysine 108. Residues lysine 108 and glycine 136 each coordinate sn-glycerol 3-phosphate. Residue alanine 140 participates in NADPH binding. Residues lysine 191, aspartate 244, serine 254, arginine 255, and asparagine 256 each coordinate sn-glycerol 3-phosphate. The active-site Proton acceptor is the lysine 191. Arginine 255 provides a ligand contact to NADPH. Valine 279 and glutamate 281 together coordinate NADPH.

This sequence belongs to the NAD-dependent glycerol-3-phosphate dehydrogenase family.

Its subcellular location is the cytoplasm. The catalysed reaction is sn-glycerol 3-phosphate + NAD(+) = dihydroxyacetone phosphate + NADH + H(+). It catalyses the reaction sn-glycerol 3-phosphate + NADP(+) = dihydroxyacetone phosphate + NADPH + H(+). It participates in membrane lipid metabolism; glycerophospholipid metabolism. Its function is as follows. Catalyzes the reduction of the glycolytic intermediate dihydroxyacetone phosphate (DHAP) to sn-glycerol 3-phosphate (G3P), the key precursor for phospholipid synthesis. The protein is Glycerol-3-phosphate dehydrogenase [NAD(P)+] of Pseudomonas entomophila (strain L48).